We begin with the raw amino-acid sequence, 260 residues long: Hydroxyethylthiazole kinase 1 (260 aa).

Substrate is bound at residue methionine 39. The ATP site is built by arginine 115 and threonine 160. A substrate-binding site is contributed by glycine 187.

Belongs to the Thz kinase family. Mg(2+) serves as cofactor.

It carries out the reaction 5-(2-hydroxyethyl)-4-methylthiazole + ATP = 4-methyl-5-(2-phosphooxyethyl)-thiazole + ADP + H(+). The protein operates within cofactor biosynthesis; thiamine diphosphate biosynthesis; 4-methyl-5-(2-phosphoethyl)-thiazole from 5-(2-hydroxyethyl)-4-methylthiazole: step 1/1. In terms of biological role, catalyzes the phosphorylation of the hydroxyl group of 4-methyl-5-beta-hydroxyethylthiazole (THZ). The chain is Hydroxyethylthiazole kinase 1 from Streptococcus pneumoniae (strain Taiwan19F-14).